Consider the following 464-residue polypeptide: E3 ubiquitin-protein ligase parkin (464 aa).

The region spanning 1 to 76 is the Ubiquitin-like domain; sequence MIVFVRFNSS…VHIVQRPRRR (76 aa). At serine 65 the chain carries Phosphoserine; by PINK1. The disordered stretch occupies residues 70–96; sequence VQRPRRRSHETNASGGDEPQSTSEGSI. The necessary for PINK1-dependent localization to mitochondria stretch occupies residues 77 to 236; that stretch reads SHETNASGGD…LITSNRRSIP (160 aa). Threonine 80 carries the phosphothreonine modification. Positions 80–96 are enriched in polar residues; the sequence is TNASGGDEPQSTSEGSI. The RING-type 0; atypical zinc finger occupies 140-224; it reads PTYNSFFIYC…PTSDKDTSVA (85 aa). Residue threonine 174 is modified to Phosphothreonine; by PINK1. Residues 203–237 are SYT11 binding 1; that stretch reads TRAEFFFKCGAHPTSDKDTSVALNLITSNRRSIPC. Phosphothreonine is present on threonine 216. Residues 233-464 form a TRIAD supradomain region; the sequence is RSIPCIACTD…ACMGDHWFDV (232 aa). The Zn(2+) site is built by cysteine 237, cysteine 240, cysteine 252, histidine 256, cysteine 259, cysteine 262, cysteine 288, cysteine 292, cysteine 331, and cysteine 336. Residues 237 to 292 form an RING-type 1 zinc finger; that stretch reads CIACTDVRSPVLVFQCNHRHVICLDCFHLYCVTRLNDRQFVHDAQLGYSLPCVAGC. The SYT11 binding 2 stretch occupies residues 256-292; it reads HVICLDCFHLYCVTRLNDRQFVHDAQLGYSLPCVAGC. An IBR-type zinc finger spans residues 312–376; the sequence is TRYQQYGAEE…CKEAYHEGDC (65 aa). A Glycyl lysine isopeptide (Lys-Gly) (interchain with G-Cter in ISG15) cross-link involves residue lysine 348. Zn(2+) contacts are provided by cysteine 351, cysteine 359, cysteine 364, and cysteine 367. Residue lysine 368 forms a Glycyl lysine isopeptide (Lys-Gly) (interchain with G-Cter in ISG15) linkage. The Zn(2+) site is built by histidine 372 and cysteine 376. Positions 377–409 are REP; sequence DSLLEPSGATSQAYRVDKRAAEQARWEEASKET. Zn(2+) contacts are provided by cysteine 417 and cysteine 420. The segment at 417 to 448 adopts an RING-type 2; atypical zinc-finger fold; that stretch reads CPRCNVPIEKNGGCMHMKCPQPQCKLEWCWNC. The active site involves cysteine 430. Residues cysteine 435, cysteine 440, cysteine 445, cysteine 448, cysteine 456, and histidine 460 each contribute to the Zn(2+) site.

This sequence belongs to the RBR family. Parkin subfamily. As to quaternary structure, forms an E3 ubiquitin ligase complex with UBE2L3 or UBE2L6. Mediates 'Lys-63'-linked polyubiquitination by associating with UBE2V1. Part of a SCF-like complex, consisting of PRKN, CUL1 and FBXW7. Interacts with SNCAIP. Binds to the C2A and C2B domains of SYT11. Interacts and regulates the turnover of SEPTIN5. Part of a complex, including STUB1, HSP70 and GPR37. The amount of STUB1 in the complex increases during ER stress. STUB1 promotes the dissociation of HSP70 from PRKN and GPR37, thus facilitating PRKN-mediated GPR37 ubiquitination. HSP70 transiently associates with unfolded GPR37 and inhibits the E3 activity of PRKN, whereas, STUB1 enhances the E3 activity of PRKN through promotion of dissociation of HSP70 from PRKN-GPR37 complexes. Interacts with PSMD4 and PACRG. Interacts with LRRK2. Interacts with RANBP2. Interacts with SUMO1 but not SUMO2, which promotes nuclear localization and autoubiquitination. Interacts (via first RING-type domain) with AIMP2 (via N-terminus). Interacts with PSMA7 and RNF41. Interacts with PINK1. Forms a complex with PINK1 and PARK7. Interacts with CHPF, the interaction with isoform 2 may facilitate PRKN transport into the mitochondria. Interacts with MFN2 (phosphorylated), promotes PRKN localization in dysfunctional depolarized mitochondria. Interacts with FBXO7; this promotes translocation to dysfunctional depolarized mitochondria. Interacts with ZNF746. Interacts with heat shock protein 70 family members, including HSPA1L, HSPA1A and HSPA8; interaction HSPA1L promotes translocation to damaged mitochondria. Interacts with BAG4 and, to a lesser extent, BAG5; interaction with BAG4 inhibits translocation to damaged mitochondria. Forms a complex with PRKN and PARK7. Interacts with AMBRA1. Post-translationally, auto-ubiquitinates in an E2-dependent manner leading to its own degradation. Also polyubiquitinated by RNF41 for proteasomal degradation. In terms of processing, S-nitrosylated. Phosphorylated. Activation requires phosphorylation at Ser-65 by PINK1 and binding to PINK1 phosphorylated ubiquitin. Phosphorylation at Thr-174 by PINK1 and at Thr-216 is important for mitochondrial localization. In terms of tissue distribution, expressed in all subdivisions of the brain (at protein level). Highly expressed in brainstem, cranial nerve, pontine, cerebellar nuclei, indusium griseum, nuclei reticularis, strata oriens and laccunosum moleculare of the hippocampal CA2 region. Low levels were found in the telencephalon and diencephalon. Expressed in heart, liver, skeletal muscle, kidney and testis.

It localises to the cytoplasm. Its subcellular location is the cytosol. The protein resides in the nucleus. It is found in the endoplasmic reticulum. The protein localises to the mitochondrion. It localises to the mitochondrion outer membrane. Its subcellular location is the cell projection. The protein resides in the neuron projection. It is found in the postsynaptic density. The protein localises to the presynapse. It catalyses the reaction [E2 ubiquitin-conjugating enzyme]-S-ubiquitinyl-L-cysteine + [acceptor protein]-L-lysine = [E2 ubiquitin-conjugating enzyme]-L-cysteine + [acceptor protein]-N(6)-ubiquitinyl-L-lysine.. Its pathway is protein modification; protein ubiquitination. With respect to regulation, in the autoinhibited state the side chain of Phe-462 inserts into a hydrophobic groove in RING-0, occluding the ubiquitin acceptor site Cys-430, whereas the REP repressor element binds RING-1 and blocks its E2-binding site. Activation of PRKN requires 2 steps: (1) phosphorylation at Ser-65 by PINK1 and (2) binding to phosphorylated ubiquitin, leading to unlock repression of the catalytic Cys-430 by the RING-0 region via an allosteric mechanism and converting PRKN to its fully-active form. According to another report, phosphorylation at Ser-65 by PINK1 is not essential for activation and only binding to phosphorylated ubiquitin is essential to unlock repression. In addition, ISG15 conjugation positively regulates its ubiquitin E3 ligase activity by suppressing the intramolecular interaction that maintains its autoinhibited conformation. Functionally, functions within a multiprotein E3 ubiquitin ligase complex, catalyzing the covalent attachment of ubiquitin moieties onto substrate proteins. Substrates include SYT11 and VDAC1. Other substrates are BCL2, CCNE1, GPR37, RHOT1/MIRO1, MFN1, MFN2, STUB1, SNCAIP, SEPTIN5, TOMM20, USP30, ZNF746, MIRO1 and AIMP2. Mediates monoubiquitination as well as 'Lys-6', 'Lys-11', 'Lys-48'-linked and 'Lys-63'-linked polyubiquitination of substrates depending on the context. Participates in the removal and/or detoxification of abnormally folded or damaged protein by mediating 'Lys-63'-linked polyubiquitination of misfolded proteins such as PARK7: 'Lys-63'-linked polyubiquitinated misfolded proteins are then recognized by HDAC6, leading to their recruitment to aggresomes, followed by degradation. Mediates 'Lys-63'-linked polyubiquitination of a 22 kDa O-linked glycosylated isoform of SNCAIP, possibly playing a role in Lewy-body formation. Mediates monoubiquitination of BCL2, thereby acting as a positive regulator of autophagy. Protects against mitochondrial dysfunction during cellular stress, by acting downstream of PINK1 to coordinate mitochondrial quality control mechanisms that remove and replace dysfunctional mitochondrial components. Depending on the severity of mitochondrial damage and/or dysfunction, activity ranges from preventing apoptosis and stimulating mitochondrial biogenesis to regulating mitochondrial dynamics and eliminating severely damaged mitochondria via mitophagy. Activation and recruitment onto the outer membrane of damaged/dysfunctional mitochondria (OMM) requires PINK1-mediated phosphorylation of both PRKN and ubiquitin. After mitochondrial damage, functions with PINK1 to mediate the decision between mitophagy or preventing apoptosis by inducing either the poly- or monoubiquitination of VDAC1, respectively; polyubiquitination of VDAC1 promotes mitophagy, while monoubiquitination of VDAC1 decreases mitochondrial calcium influx which ultimately inhibits apoptosis. When cellular stress results in irreversible mitochondrial damage, promotes the autophagic degradation of dysfunctional depolarized mitochondria (mitophagy) by promoting the ubiquitination of mitochondrial proteins such as TOMM20, RHOT1/MIRO1, MFN1 and USP30. Preferentially assembles 'Lys-6'-, 'Lys-11'- and 'Lys-63'-linked polyubiquitin chains, leading to mitophagy. The PINK1-PRKN pathway also promotes fission of damaged mitochondria by PINK1-mediated phosphorylation which promotes the PRKN-dependent degradation of mitochondrial proteins involved in fission such as MFN2. This prevents the refusion of unhealthy mitochondria with the mitochondrial network or initiates mitochondrial fragmentation facilitating their later engulfment by autophagosomes. Regulates motility of damaged mitochondria via the ubiquitination and subsequent degradation of MIRO1 and MIRO2; in motor neurons, this likely inhibits mitochondrial intracellular anterograde transport along the axons which probably increases the chance of the mitochondria undergoing mitophagy in the soma. Involved in mitochondrial biogenesis via the 'Lys-48'-linked polyubiquitination of transcriptional repressor ZNF746/PARIS which leads to its subsequent proteasomal degradation and allows activation of the transcription factor PPARGC1A. Limits the production of reactive oxygen species (ROS). Regulates cyclin-E during neuronal apoptosis. In collaboration with CHPF isoform 2, may enhance cell viability and protect cells from oxidative stress. Independently of its ubiquitin ligase activity, protects from apoptosis by the transcriptional repression of p53/TP53. May protect neurons against alpha synuclein toxicity, proteasomal dysfunction, GPR37 accumulation, and kainate-induced excitotoxicity. May play a role in controlling neurotransmitter trafficking at the presynaptic terminal and in calcium-dependent exocytosis. May represent a tumor suppressor gene. This Mus musculus (Mouse) protein is E3 ubiquitin-protein ligase parkin.